The following is a 77-amino-acid chain: U8-lycotoxin-Ls1m (77 aa).

The N-terminal stretch at 1–20 is a signal peptide; the sequence is MKLMIFTGLVLFAIVSLIEA. Positions 21–26 are excised as a propeptide; the sequence is QAENEK.

This sequence belongs to the neurotoxin 19 (CSTX) family. 08 (U8-Lctx) subfamily. Contains 4 disulfide bonds. As to expression, expressed by the venom gland.

Its subcellular location is the secreted. This Lycosa singoriensis (Wolf spider) protein is U8-lycotoxin-Ls1m.